The following is a 391-amino-acid chain: Phosphoglycerate kinase (391 aa).

Substrate contacts are provided by residues 21–23 (DLN), Arg-36, 59–62 (HLGR), Arg-113, and Arg-146. Residues Lys-197, Glu-319, and 345–348 (GGDT) contribute to the ATP site.

Belongs to the phosphoglycerate kinase family. In terms of assembly, monomer.

The protein localises to the cytoplasm. It carries out the reaction (2R)-3-phosphoglycerate + ATP = (2R)-3-phospho-glyceroyl phosphate + ADP. The protein operates within carbohydrate degradation; glycolysis; pyruvate from D-glyceraldehyde 3-phosphate: step 2/5. The polypeptide is Phosphoglycerate kinase (Xanthomonas oryzae pv. oryzae (strain MAFF 311018)).